Here is a 205-residue protein sequence, read N- to C-terminus: Peroxynitrite isomerase (205 aa).

A disordered region spans residues 1–23; that stretch reads MTEPDPAAAEQRPSVGRNLPTFQ. Residues 52–58 carry the GXWXGXG motif; it reads GVWRGEG. Heme b contacts are provided by threonine 63, lysine 168, and histidine 195.

The protein belongs to the nitrobindin family. In terms of assembly, homodimer. Heme b serves as cofactor.

The enzyme catalyses peroxynitrite = nitrate. Its pathway is nitrogen metabolism. Its function is as follows. Heme-binding protein able to scavenge peroxynitrite and to protect free L-tyrosine against peroxynitrite-mediated nitration, by acting as a peroxynitrite isomerase that converts peroxynitrite to nitrate. Therefore, this protein likely plays a role in peroxynitrite sensing and in the detoxification of reactive nitrogen and oxygen species (RNS and ROS, respectively). Is able to bind nitric oxide (NO) in vitro, but may act as a sensor of peroxynitrite levels in vivo. The sequence is that of Peroxynitrite isomerase from Mycobacteroides abscessus (strain ATCC 19977 / DSM 44196 / CCUG 20993 / CIP 104536 / JCM 13569 / NCTC 13031 / TMC 1543 / L948) (Mycobacterium abscessus).